Consider the following 352-residue polypeptide: Histidine biosynthesis bifunctional protein HisB (352 aa).

The segment at 1–164 is histidinol-phosphatase; sequence MSQKILFIDR…EIENEILSSF (164 aa). Aspartate 9 functions as the Nucleophile in the catalytic mechanism. Mg(2+) is bound by residues aspartate 9 and aspartate 11. The Proton donor role is filled by aspartate 11. Zn(2+) is bound by residues cysteine 93, histidine 95, cysteine 101, and cysteine 103. Aspartate 130 lines the Mg(2+) pocket. Residues 165–352 are imidazoleglycerol-phosphate dehydratase; sequence RSASYQRTTK…ENLASSKGVI (188 aa).

It in the N-terminal section; belongs to the histidinol-phosphatase family. The protein in the C-terminal section; belongs to the imidazoleglycerol-phosphate dehydratase family. Requires Mg(2+) as cofactor. It depends on Zn(2+) as a cofactor.

It localises to the cytoplasm. The enzyme catalyses D-erythro-1-(imidazol-4-yl)glycerol 3-phosphate = 3-(imidazol-4-yl)-2-oxopropyl phosphate + H2O. It carries out the reaction L-histidinol phosphate + H2O = L-histidinol + phosphate. The protein operates within amino-acid biosynthesis; L-histidine biosynthesis; L-histidine from 5-phospho-alpha-D-ribose 1-diphosphate: step 6/9. It participates in amino-acid biosynthesis; L-histidine biosynthesis; L-histidine from 5-phospho-alpha-D-ribose 1-diphosphate: step 8/9. This is Histidine biosynthesis bifunctional protein HisB from Campylobacter jejuni subsp. jejuni serotype O:6 (strain 81116 / NCTC 11828).